Reading from the N-terminus, the 688-residue chain is Protein sel-1 homolog 2 (688 aa).

The signal sequence occupies residues 1 to 18 (MNPLALLVEILIIIEVTT). Residues 19–662 (KNSEAERYNR…KWKWLKLDST (644 aa)) are Extracellular-facing. N34 carries N-linked (GlcNAc...) asparagine glycosylation. Sel1-like repeat units follow at residues 107–142 (GDEL…DMGN), 143–178 (LKAM…KEGS), 179–214 (YKAQ…AGGS), 215–250 (MMSQ…DYIA), 297–333 (VQIQ…KAGS), 334–370 (ANAM…SKGN), 371–406 (AIGL…EKGW), 407–442 (PNAQ…QSGQ), 443–478 (PLAI…ELGH), 551–586 (AFAR…DKHH), and 588–623 (AQAM…QTSP). N162 is a glycosylation site (N-linked (GlcNAc...) asparagine). A helical transmembrane segment spans residues 663–683 (IGPYWDLLVIGLIVVVLIFLL). At 684–688 (RNHHR) the chain is on the cytoplasmic side.

It belongs to the sel-1 family.

Its subcellular location is the membrane. The protein resides in the cell projection. The protein localises to the cilium. It is found in the nucleus speckle. This is Protein sel-1 homolog 2 (Sel1l2) from Rattus norvegicus (Rat).